The following is a 404-amino-acid chain: Pre-heme d1 synthase (404 aa).

A Radical SAM core domain is found at 22 to 235 (GTPKPVVIWN…LIARALESAE (214 aa)). 7 residues coordinate [4Fe-4S] cluster: Cys-36, Cys-40, Cys-43, Cys-340, Cys-343, Cys-349, and Cys-371.

It belongs to the radical SAM superfamily. Requires [4Fe-4S] cluster as cofactor.

Its pathway is porphyrin-containing compound metabolism. Functionally, involved in heme d1 biosynthesis. Radical SAM enzyme that catalyzes the removal of two propionate side chains from the intermediate 12,18-didecarboxysiroheme (DDSH) and may introduce the keto functions on rings A and B, yielding the heme d1 precursor dihydro-heme d1. The sequence is that of Pre-heme d1 synthase from Dinoroseobacter shibae (strain DSM 16493 / NCIMB 14021 / DFL 12).